The sequence spans 97 residues: Large ribosomal subunit protein bL27 (97 aa).

Positions 1-12 (MLKMNLANLQLF) are excised as a propeptide. The interval 14 to 37 (HKKGGGSTSNGRDSQAKRLGAKAA) is disordered.

Belongs to the bacterial ribosomal protein bL27 family. In terms of processing, the N-terminus is cleaved by ribosomal processing cysteine protease Prp.

This is Large ribosomal subunit protein bL27 from Streptococcus uberis (strain ATCC BAA-854 / 0140J).